We begin with the raw amino-acid sequence, 391 residues long: GTPase Obg (391 aa).

The Obg domain maps to 1–159 (MKFVDEASIL…RDLLLELMLL (159 aa)). Residues 127 to 147 (NTRFKSSVNRTPRQKTNGTPG) form a disordered region. A compositionally biased stretch (polar residues) spans 129-145 (RFKSSVNRTPRQKTNGT). The OBG-type G domain maps to 160–333 (ADVGMLGMPN…LCWDVMTFII (174 aa)). GTP contacts are provided by residues 166–173 (GMPNAGKS), 191–195 (FTTLV), 213–216 (DIPG), 283–286 (NKID), and 314–316 (SAA). Residues Ser-173 and Thr-193 each coordinate Mg(2+).

The protein belongs to the TRAFAC class OBG-HflX-like GTPase superfamily. OBG GTPase family. Monomer. Mg(2+) serves as cofactor.

The protein resides in the cytoplasm. An essential GTPase which binds GTP, GDP and possibly (p)ppGpp with moderate affinity, with high nucleotide exchange rates and a fairly low GTP hydrolysis rate. Plays a role in control of the cell cycle, stress response, ribosome biogenesis and in those bacteria that undergo differentiation, in morphogenesis control. The protein is GTPase Obg of Salmonella arizonae (strain ATCC BAA-731 / CDC346-86 / RSK2980).